Consider the following 351-residue polypeptide: Hydroxymethylglutaryl-CoA synthase (351 aa).

Asp28 contacts (3S)-3-hydroxy-3-methylglutaryl-CoA. Glu80 functions as the Proton donor/acceptor in the catalytic mechanism. (3S)-3-hydroxy-3-methylglutaryl-CoA contacts are provided by Cys112 and Thr153. Cys112 acts as the Acyl-thioester intermediate in catalysis. Position 199 (Arg199) interacts with CoA. 2 residues coordinate (3S)-3-hydroxy-3-methylglutaryl-CoA: Thr201 and His234. The Proton donor/acceptor role is filled by His234. Residue Lys239 coordinates CoA. (3S)-3-hydroxy-3-methylglutaryl-CoA contacts are provided by Arg243, Asn266, and Ser296.

Belongs to the thiolase-like superfamily. Archaeal HMG-CoA synthase family. Interacts with acetoacetyl-CoA thiolase that catalyzes the precedent step in the pathway and with a DUF35 protein. The acetoacetyl-CoA thiolase/HMG-CoA synthase complex channels the intermediate via a fused CoA-binding site, which allows for efficient coupling of the endergonic thiolase reaction with the exergonic HMGCS reaction.

The catalysed reaction is acetoacetyl-CoA + acetyl-CoA + H2O = (3S)-3-hydroxy-3-methylglutaryl-CoA + CoA + H(+). Its pathway is metabolic intermediate biosynthesis; (R)-mevalonate biosynthesis; (R)-mevalonate from acetyl-CoA: step 2/3. In terms of biological role, catalyzes the condensation of acetyl-CoA with acetoacetyl-CoA to form 3-hydroxy-3-methylglutaryl-CoA (HMG-CoA). Functions in the mevalonate (MVA) pathway leading to isopentenyl diphosphate (IPP), a key precursor for the biosynthesis of isoprenoid compounds that are building blocks of archaeal membrane lipids. In Picrophilus torridus (strain ATCC 700027 / DSM 9790 / JCM 10055 / NBRC 100828 / KAW 2/3), this protein is Hydroxymethylglutaryl-CoA synthase.